The primary structure comprises 110 residues: U1-lycotoxin-Ls1ii (110 aa).

Positions 1–20 (MKFVLLFGVLLVTLFSYSSA) are cleaved as a signal peptide. Positions 21-44 (EMLDDFDQADEDELLSLIEKEEAR) are excised as a propeptide. 4 cysteine pairs are disulfide-bonded: Cys-47–Cys-62, Cys-54–Cys-71, Cys-61–Cys-89, and Cys-73–Cys-87.

Belongs to the neurotoxin 19 (CSTX) family. 03 subfamily. Expressed by the venom gland.

Its subcellular location is the secreted. This Lycosa singoriensis (Wolf spider) protein is U1-lycotoxin-Ls1ii.